A 240-amino-acid polypeptide reads, in one-letter code: Aquaporin Z (240 aa).

Transmembrane regions (helical) follow at residues 10 to 30 (MIGT…AAGF) and 35 to 55 (IGLV…AYAI). Positions 64–66 (NPA) match the NPA 1 motif. 3 helical membrane-spanning segments follow: residues 90 to 110 (VLGA…AAGF), 131 to 151 (LVAC…VIMG), and 160 to 180 (GFAP…SIPV). The short motif at 186 to 188 (NPA) is the NPA 2 element. The chain crosses the membrane as a helical span at residues 202–222 (IGQLWLFWVAPLLGGVLGGVI).

It belongs to the MIP/aquaporin (TC 1.A.8) family. In terms of assembly, homotetramer.

The protein resides in the cell inner membrane. The enzyme catalyses H2O(in) = H2O(out). Functionally, channel that permits osmotically driven movement of water in both directions. It is involved in the osmoregulation and in the maintenance of cell turgor during volume expansion in rapidly growing cells. It mediates rapid entry or exit of water in response to abrupt changes in osmolarity. This Rhodopseudomonas palustris (strain ATCC BAA-98 / CGA009) protein is Aquaporin Z.